The chain runs to 267 residues: Tryptophan synthase alpha chain (267 aa).

Catalysis depends on proton acceptor residues glutamate 43 and aspartate 54.

This sequence belongs to the TrpA family. In terms of assembly, tetramer of two alpha and two beta chains.

The enzyme catalyses (1S,2R)-1-C-(indol-3-yl)glycerol 3-phosphate + L-serine = D-glyceraldehyde 3-phosphate + L-tryptophan + H2O. It functions in the pathway amino-acid biosynthesis; L-tryptophan biosynthesis; L-tryptophan from chorismate: step 5/5. In terms of biological role, the alpha subunit is responsible for the aldol cleavage of indoleglycerol phosphate to indole and glyceraldehyde 3-phosphate. The chain is Tryptophan synthase alpha chain from Bacillus pumilus (strain SAFR-032).